The chain runs to 577 residues: Endopolyphosphatase (577 aa).

The Cytoplasmic portion of the chain corresponds to 1-2 (MR). Residues 3-23 (PSVITVAVLFVQSTWASFAFG) form a helical; Signal-anchor for type II membrane protein membrane-spanning segment. Over 24–577 (NPMSMRNKAH…YIGSISDFED (554 aa)) the chain is Vacuolar. 4 N-linked (GlcNAc...) asparagine glycosylation sites follow: asparagine 363, asparagine 370, asparagine 375, and asparagine 399. Residues 430–460 (SDYEIDKKKKKKKKNNKKKKKNKRKNIKPGP) are disordered. The span at 437–456 (KKKKKKKNNKKKKKNKRKNI) shows a compositional bias: basic residues. Asparagine 481 carries an N-linked (GlcNAc...) asparagine glycan.

The protein belongs to the endopolyphosphatase PPN1 family. The cofactor is a divalent metal cation. Post-translationally, processing by proteases in the vacuole may be required for activation.

It localises to the vacuole membrane. It carries out the reaction [phosphate](n+1) + n H2O = (n+1) phosphate + n H(+). Its function is as follows. Catalyzes the hydrolysis of inorganic polyphosphate (polyP) chains of many hundreds of phosphate residues into shorter lengths. This is Endopolyphosphatase (ppn1) from Schizosaccharomyces pombe (strain 972 / ATCC 24843) (Fission yeast).